The primary structure comprises 159 residues: Transcriptional repressor NrdR (159 aa).

Residues 3–34 (CPFCGGVENKVMDSRVSRDGNAIRRRRECLAC) fold into a zinc finger. In terms of domain architecture, ATP-cone spans 49–139 (PTVVKKDGRR…VYRQFRDVND (91 aa)).

This sequence belongs to the NrdR family. Zn(2+) serves as cofactor.

Its function is as follows. Negatively regulates transcription of bacterial ribonucleotide reductase nrd genes and operons by binding to NrdR-boxes. This chain is Transcriptional repressor NrdR, found in Syntrophus aciditrophicus (strain SB).